The chain runs to 400 residues: Large envelope protein (400 aa).

Methionine 1 is subject to N-acetylmethionine. Disordered stretches follow at residues methionine 1–alanine 55 and leucine 85–glutamine 118. Residue glycine 2 is the site of N-myristoyl glycine; by host attachment. The segment at glycine 2 to alanine 119 is pre-S1. The tract at residues glycine 2–asparagine 174 is pre-S. Residues glycine 2–glycine 181 are Virion surface; in external conformation-facing. The Intravirion; in internal conformation portion of the chain corresponds to glycine 2–arginine 253. Residue tryptophan 4 is glycosylated (N-linked (GlcNAc...) asparagine). Positions serine 96–threonine 106 are enriched in polar residues. Residues methionine 120–asparagine 174 are pre-S2. The helical transmembrane segment at phenylalanine 182–isoleucine 202 threads the bilayer. Topologically, residues proline 203 to arginine 253 are intravirion; in external conformation. Residues phenylalanine 254 to phenylalanine 274 traverse the membrane as a helical segment. The Virion surface segment spans residues glutamine 275 to serine 348. N-linked (GlcNAc...) asparagine; by host glycosylation occurs at asparagine 320. A helical membrane pass occupies residues leucine 349–isoleucine 369. Residues tryptophan 370 to tryptophan 375 lie on the Intravirion side of the membrane. The chain crosses the membrane as a helical span at residues glycine 376–valine 398. Over tyrosine 399–isoleucine 400 the chain is Virion surface.

This sequence belongs to the orthohepadnavirus major surface antigen family. In terms of assembly, in its internal form (Li-HBsAg), interacts with the capsid protein and with the isoform S. Interacts with host chaperone CANX. As to quaternary structure, associates with host chaperone CANX through its pre-S2 N glycan; this association may be essential for isoform M proper secretion. Interacts with isoform L. Interacts with the antigens of satellite virus HDV (HDVAgs); this interaction is required for encapsidation of HDV genomic RNA. Isoform M is N-terminally acetylated by host at a ratio of 90%, and N-glycosylated by host at the pre-S2 region. In terms of processing, myristoylated.

It is found in the virion membrane. In terms of biological role, the large envelope protein exists in two topological conformations, one which is termed 'external' or Le-HBsAg and the other 'internal' or Li-HBsAg. In its external conformation the protein attaches the virus to cell receptors and thereby initiating infection. This interaction determines the species specificity and liver tropism. This attachment induces virion internalization predominantly through caveolin-mediated endocytosis. The large envelope protein also assures fusion between virion membrane and endosomal membrane. In its internal conformation the protein plays a role in virion morphogenesis and mediates the contact with the nucleocapsid like a matrix protein. Functionally, the middle envelope protein plays an important role in the budding of the virion. It is involved in the induction of budding in a nucleocapsid independent way. In this process the majority of envelope proteins bud to form subviral lipoprotein particles of 22 nm of diameter that do not contain a nucleocapsid. This is Large envelope protein from Hepatitis B virus genotype C subtype ar (isolate Japan/S-207/1988) (HBV-C).